Consider the following 143-residue polypeptide: MSNKTKGSTLERYLVSRLRDKGFAVIRAPASGSNRKDHVPDVIAMKSGVIILIEMKSRKNGNKIYIQKEQAEGIKEFAKKSGGELFLGAKIAKDLKFLRFDELRRTEAGNYVADLETIKSGMDFDELVRYVEGKISKTLDSFM.

Mg(2+) is bound at residue glutamate 11. The active site involves serine 31. Positions 41 and 54 each coordinate Mg(2+).

This sequence belongs to the Holliday junction resolvase Hjc family. As to quaternary structure, homodimer. It depends on Mg(2+) as a cofactor.

It catalyses the reaction Endonucleolytic cleavage at a junction such as a reciprocal single-stranded crossover between two homologous DNA duplexes (Holliday junction).. In terms of biological role, a structure-specific endonuclease that resolves Holliday junction (HJ) intermediates during genetic recombination. Cleaves 4-way DNA junctions introducing paired nicks in opposing strands, leaving a 5'-terminal phosphate and a 3'-terminal hydroxyl group that are ligated to produce recombinant products. Functionally, redundant function with Holliday junction resolvase Hje. In Sulfolobus acidocaldarius (strain ATCC 33909 / DSM 639 / JCM 8929 / NBRC 15157 / NCIMB 11770), this protein is Crossover junction endodeoxyribonuclease Hjc.